Consider the following 503-residue polypeptide: Glutamate--tRNA ligase (503 aa).

A 'HIGH' region motif is present at residues 12–22 (PSPTGYLHVGG). Residues 259–263 (KLSKR) carry the 'KMSKS' region motif. Lys-262 contacts ATP.

The protein belongs to the class-I aminoacyl-tRNA synthetase family. Glutamate--tRNA ligase type 1 subfamily. In terms of assembly, monomer.

It localises to the cytoplasm. It carries out the reaction tRNA(Glu) + L-glutamate + ATP = L-glutamyl-tRNA(Glu) + AMP + diphosphate. Functionally, catalyzes the attachment of glutamate to tRNA(Glu) in a two-step reaction: glutamate is first activated by ATP to form Glu-AMP and then transferred to the acceptor end of tRNA(Glu). This chain is Glutamate--tRNA ligase, found in Chlorobaculum parvum (strain DSM 263 / NCIMB 8327) (Chlorobium vibrioforme subsp. thiosulfatophilum).